A 300-amino-acid chain; its full sequence is 7-methylguanosine phosphate-specific 5'-nucleotidase (300 aa).

Aspartate 41 (nucleophile) is an active-site residue. Mg(2+)-binding residues include aspartate 41 and aspartate 43. The active-site Proton donor is aspartate 43. Glutamate 88 is a CMP binding site. Position 88 (glutamate 88) interacts with N(7)-methyl-GMP. Substrate contacts are provided by residues 156–157 (SA) and lysine 205. Residue aspartate 230 coordinates Mg(2+). Position 256 is an N6-acetyllysine (lysine 256).

The protein belongs to the pyrimidine 5'-nucleotidase family. As to quaternary structure, monomer.

The protein localises to the cytoplasm. It catalyses the reaction N(7)-methyl-GMP + H2O = N(7)-methylguanosine + phosphate. The enzyme catalyses CMP + H2O = cytidine + phosphate. It carries out the reaction a ribonucleoside 5'-phosphate + H2O = a ribonucleoside + phosphate. Specifically hydrolyzes 7-methylguanosine monophosphate (m(7)GMP) to 7-methylguanosine and inorganic phosphate. The specific activity for m(7)GMP may protect cells against undesired salvage of m(7)GMP and its incorporation into nucleic acids. Also has weak activity for CMP. UMP and purine nucleotides are poor substrates. The sequence is that of 7-methylguanosine phosphate-specific 5'-nucleotidase (NT5C3B) from Homo sapiens (Human).